A 601-amino-acid polypeptide reads, in one-letter code: Glutamyl-tRNA(Gln) amidotransferase subunit B, mitochondrial (601 aa).

The transit peptide at 1-52 (MLQQWLRQSPRAARVLRGSCCRGPQSGSLRHSPLPTAPHRCIRSLQTSATES) directs the protein to the mitochondrion.

It belongs to the GatB/GatE family. GatB subfamily. Subunit of the heterotrimeric GatCAB amidotransferase (AdT) complex, composed of A, B and C subunits.

It is found in the mitochondrion. The catalysed reaction is L-glutamyl-tRNA(Gln) + L-glutamine + ATP + H2O = L-glutaminyl-tRNA(Gln) + L-glutamate + ADP + phosphate + H(+). In terms of biological role, allows the formation of correctly charged Gln-tRNA(Gln) through the transamidation of misacylated Glu-tRNA(Gln) in the mitochondria. The reaction takes place in the presence of glutamine and ATP through an activated gamma-phospho-Glu-tRNA(Gln). The sequence is that of Glutamyl-tRNA(Gln) amidotransferase subunit B, mitochondrial from Aspergillus fumigatus (strain ATCC MYA-4609 / CBS 101355 / FGSC A1100 / Af293) (Neosartorya fumigata).